A 185-amino-acid chain; its full sequence is Peptidyl-tRNA hydrolase (185 aa).

Position 14 (Tyr-14) interacts with tRNA. His-19 functions as the Proton acceptor in the catalytic mechanism. The tRNA site is built by Tyr-64, Asn-66, and Asn-112.

It belongs to the PTH family. In terms of assembly, monomer.

It localises to the cytoplasm. It carries out the reaction an N-acyl-L-alpha-aminoacyl-tRNA + H2O = an N-acyl-L-amino acid + a tRNA + H(+). In terms of biological role, hydrolyzes ribosome-free peptidyl-tRNAs (with 1 or more amino acids incorporated), which drop off the ribosome during protein synthesis, or as a result of ribosome stalling. Catalyzes the release of premature peptidyl moieties from peptidyl-tRNA molecules trapped in stalled 50S ribosomal subunits, and thus maintains levels of free tRNAs and 50S ribosomes. This is Peptidyl-tRNA hydrolase from Lactobacillus helveticus (strain DPC 4571).